The sequence spans 520 residues: Endosomal/lysosomal proton channel TMEM175 (520 aa).

Residues 1–27 are disordered; sequence MGENDESEIIEHHDDEEMEKRRPPRTH. Over 1-49 the chain is Cytoplasmic; sequence MGENDESEIIEHHDDEEMEKRRPPRTHAQSFLESVASSVKEGHSSTQSS. A compositionally biased stretch (basic and acidic residues) spans 9-21; the sequence is IIEHHDDEEMEKR. Residues 50–72 form a helical membrane-spanning segment; it reads HRLLAYSDALISIIATVMILPVA. A RxxxFSD motif 1 motif is present at residues 51–57; it reads RLLAYSD. The Lumenal segment spans residues 73–93; it reads HTKIQEDEELKQSIQALLTTK. The interval 74 to 79 is short helix H1-1; the sequence is TKIQED. Positions 81-87 are short helix H2-1; it reads ELKQSIQ. The chain crosses the membrane as a helical span at residues 94–116; the sequence is IAVYLMTFLIVTVAWAAHIRLFQ. Topologically, residues 117–122 are cytoplasmic; it reads VIERID. A helical membrane pass occupies residues 123–144; it reads DTLALLNLACMMLITFLPYTFS. The Lumenal segment spans residues 145–154; that stretch reads LMATFPNNIL. A helical membrane pass occupies residues 155–176; that stretch reads GILLFCACVMVIGLIQALIVLY. The Cytoplasmic portion of the chain corresponds to 177–200; the sequence is GFSHPFLLNDQIQMSENQAYYKQH. Helical transmembrane passes span 201-221 and 222-242; these read ILKV…FSFI and FFQL…ISQC. At 243–274 the chain is on the cytoplasmic side; it reads LKWIRSKAIGGQTDESPDSMPFYTYHPSEPLS. The chain crosses the membrane as a helical span at residues 275–299; that stretch reads KERVEAFSDGVFAIVATLLILDICE. The RxxxFSD motif 2 signature appears at 277–283; it reads RVEAFSD. Residues 300 to 326 are Lumenal-facing; the sequence is GNVPDPSVVKKKFDNSLIAALQEYGPE. The tract at residues 305–313 is short helix H1-2; sequence PSVVKKKFD. The tract at residues 315 to 321 is short helix H2-2; it reads SLIAALQ. The chain crosses the membrane as a helical span at residues 327–349; it reads YLAYFGSFVTVGLLWFVHHSLFL. Topologically, residues 350-355 are cytoplasmic; it reads HVTKAT. A helical transmembrane segment spans residues 356–377; it reads RLMGLFNTFSLAFVGGLPLAYQ. At 378–392 the chain is on the lumenal side; sequence LTHESPRGSRNELEA. A helical membrane pass occupies residues 393–413; sequence VQISCVIIFFASLFQLAIWVT. Topologically, residues 414 to 433 are cytoplasmic; that stretch reads ALFTERETLHPYVRYGGREH. A helical transmembrane segment spans residues 434–457; the sequence is TFMLAKLSLYPCVALGTFFITCIL. At 458 to 459 the chain is on the lumenal side; sequence SR. A helical transmembrane segment spans residues 460–486; sequence FSAPIFHMMEICIPFAFLLLRLLVRVA. The Cytoplasmic portion of the chain corresponds to 487 to 520; it reads LALLRWLFCSARNDLERIPVEEEESRLPINDIVT.

Belongs to the TMEM175 family. As to quaternary structure, homodimer.

Its subcellular location is the endosome membrane. It localises to the lysosome membrane. The enzyme catalyses H(+)(in) = H(+)(out). It catalyses the reaction K(+)(in) = K(+)(out). Active at low pH (under pH 4.6): proton channel activity is activated by luminal side protons. Polyunsaturated fatty acids, such as arachidonic acid, also activate the channel activity. Proton-activated proton channel that catalyzes proton efflux from endosomes and lysosomes to maintain a steady-state pH. Activated at low pH (under pH 4.6) by luminal side protons: selectively mediates lysosomal proton release from lysosomes, eliciting a proton leak that balances V-ATPase activity to maintain pH homeostasis. Regulation of lumenal pH stability is required for autophagosome-lysosome fusion. Also acts as a potassium channel at higher pH, regulating potassium conductance in endosomes and lysosomes. This Danio rerio (Zebrafish) protein is Endosomal/lysosomal proton channel TMEM175.